Here is a 324-residue protein sequence, read N- to C-terminus: tRNA N6-adenosine threonylcarbamoyltransferase (324 aa).

Fe cation contacts are provided by histidine 107, histidine 111, and tyrosine 127. Residues 127–131 (YVSGG), aspartate 159, glycine 172, glutamate 176, and asparagine 257 contribute to the substrate site. Aspartate 285 is a binding site for Fe cation.

The protein belongs to the KAE1 / TsaD family. In terms of assembly, monomer. Component of the KEOPS complex that consists of Kae1, Bud32, Cgi121 and Pcc1; the whole complex dimerizes. Fe(2+) serves as cofactor.

The protein localises to the cytoplasm. The enzyme catalyses L-threonylcarbamoyladenylate + adenosine(37) in tRNA = N(6)-L-threonylcarbamoyladenosine(37) in tRNA + AMP + H(+). Its function is as follows. Required for the formation of a threonylcarbamoyl group on adenosine at position 37 (t(6)A37) in tRNAs that read codons beginning with adenine. Is a component of the KEOPS complex that is probably involved in the transfer of the threonylcarbamoyl moiety of threonylcarbamoyl-AMP (TC-AMP) to the N6 group of A37. Kae1 likely plays a direct catalytic role in this reaction, but requires other protein(s) of the complex to fulfill this activity. The polypeptide is tRNA N6-adenosine threonylcarbamoyltransferase (Pyrococcus furiosus (strain ATCC 43587 / DSM 3638 / JCM 8422 / Vc1)).